Reading from the N-terminus, the 337-residue chain is UDP-3-O-acylglucosamine N-acyltransferase (337 aa).

H238 (proton acceptor) is an active-site residue.

It belongs to the transferase hexapeptide repeat family. LpxD subfamily. In terms of assembly, homotrimer.

The catalysed reaction is a UDP-3-O-[(3R)-3-hydroxyacyl]-alpha-D-glucosamine + a (3R)-hydroxyacyl-[ACP] = a UDP-2-N,3-O-bis[(3R)-3-hydroxyacyl]-alpha-D-glucosamine + holo-[ACP] + H(+). The protein operates within bacterial outer membrane biogenesis; LPS lipid A biosynthesis. Catalyzes the N-acylation of UDP-3-O-acylglucosamine using 3-hydroxyacyl-ACP as the acyl donor. Is involved in the biosynthesis of lipid A, a phosphorylated glycolipid that anchors the lipopolysaccharide to the outer membrane of the cell. The polypeptide is UDP-3-O-acylglucosamine N-acyltransferase (Xanthomonas oryzae pv. oryzae (strain MAFF 311018)).